A 456-amino-acid chain; its full sequence is Glutamyl-tRNA(Gln) amidotransferase subunit A (456 aa).

Active-site charge relay system residues include K74 and S149. S173 acts as the Acyl-ester intermediate in catalysis.

Belongs to the amidase family. GatA subfamily. As to quaternary structure, heterotrimer of A, B and C subunits.

It catalyses the reaction L-glutamyl-tRNA(Gln) + L-glutamine + ATP + H2O = L-glutaminyl-tRNA(Gln) + L-glutamate + ADP + phosphate + H(+). Functionally, allows the formation of correctly charged Gln-tRNA(Gln) through the transamidation of misacylated Glu-tRNA(Gln) in organisms which lack glutaminyl-tRNA synthetase. The reaction takes place in the presence of glutamine and ATP through an activated gamma-phospho-Glu-tRNA(Gln). In Methanobrevibacter smithii (strain ATCC 35061 / DSM 861 / OCM 144 / PS), this protein is Glutamyl-tRNA(Gln) amidotransferase subunit A.